A 349-amino-acid chain; its full sequence is tRNA N6-adenosine threonylcarbamoyltransferase (349 aa).

Fe cation is bound by residues His-114 and His-118. Substrate is bound by residues Ile-136 to Gly-140, Asp-169, Gly-182, and Asn-280. Asp-308 is a Fe cation binding site.

This sequence belongs to the KAE1 / TsaD family. The cofactor is Fe(2+).

It localises to the cytoplasm. The catalysed reaction is L-threonylcarbamoyladenylate + adenosine(37) in tRNA = N(6)-L-threonylcarbamoyladenosine(37) in tRNA + AMP + H(+). Its function is as follows. Required for the formation of a threonylcarbamoyl group on adenosine at position 37 (t(6)A37) in tRNAs that read codons beginning with adenine. Is involved in the transfer of the threonylcarbamoyl moiety of threonylcarbamoyl-AMP (TC-AMP) to the N6 group of A37, together with TsaE and TsaB. TsaD likely plays a direct catalytic role in this reaction. The polypeptide is tRNA N6-adenosine threonylcarbamoyltransferase (Ehrlichia chaffeensis (strain ATCC CRL-10679 / Arkansas)).